A 280-amino-acid polypeptide reads, in one-letter code: Urease accessory protein UreD (280 aa).

Belongs to the UreD family. UreD, UreF and UreG form a complex that acts as a GTP-hydrolysis-dependent molecular chaperone, activating the urease apoprotein by helping to assemble the nickel containing metallocenter of UreC. The UreE protein probably delivers the nickel.

It localises to the cytoplasm. Functionally, required for maturation of urease via the functional incorporation of the urease nickel metallocenter. The sequence is that of Urease accessory protein UreD from Mesorhizobium japonicum (strain LMG 29417 / CECT 9101 / MAFF 303099) (Mesorhizobium loti (strain MAFF 303099)).